A 184-amino-acid chain; its full sequence is Protein MEH1 (184 aa).

Gly2 carries the N-myristoyl glycine lipid modification. Residues Cys7 and Cys8 are each lipidated (S-palmitoyl cysteine). The stretch at 30-71 (QGNANDEYDAEQMRLKEHEHEQKLLAREQELRDIVANTNDKL) forms a coiled coil. Positions 89 to 147 (LQEALDKRQQEEGGDSREDERSAGDDNLSGHSVPSSGSAQATTHQTAPRTNTFTLLTSP) are disordered. Basic and acidic residues predominate over residues 92 to 112 (ALDKRQQEEGGDSREDERSAG). The span at 117–147 (SGHSVPSSGSAQATTHQTAPRTNTFTLLTSP) shows a compositional bias: polar residues. Ser146 and Ser149 each carry phosphoserine.

In terms of assembly, component of the GSE complex composed of GTR1, GTR2, SLM4, MEH1 and LTV1. Component of the EGO complex, at least composed of GTR2, SLM4 and MEH1.

The protein localises to the vacuole membrane. Component of the GSE complex, a GTPase complex required for intracellular sorting of GAP1 out of the endosome. Component of the EGO complex, a complex involved in the regulation of microautophagy. In Saccharomyces cerevisiae (strain ATCC 204508 / S288c) (Baker's yeast), this protein is Protein MEH1 (MEH1).